The following is a 113-amino-acid chain: Hydrogenase maturation factor HypA (113 aa).

H2 contributes to the Ni(2+) binding site. C73, C76, C89, and C92 together coordinate Zn(2+).

The protein belongs to the HypA/HybF family.

Its function is as follows. Involved in the maturation of [NiFe] hydrogenases. Required for nickel insertion into the metal center of the hydrogenase. This is Hydrogenase maturation factor HypA from Legionella pneumophila subsp. pneumophila (strain Philadelphia 1 / ATCC 33152 / DSM 7513).